A 579-amino-acid chain; its full sequence is Type II methyltransferase M.BseCI (579 aa).

Belongs to the N(4)/N(6)-methyltransferase family.

It catalyses the reaction a 2'-deoxyadenosine in DNA + S-adenosyl-L-methionine = an N(6)-methyl-2'-deoxyadenosine in DNA + S-adenosyl-L-homocysteine + H(+). In terms of biological role, a gamma subtype methylase, recognizes the double-stranded sequence 5'-ATCGAT-3', methylation on A-5 on both strands, and protects the DNA from cleavage by the BanIII endonuclease. The chain is Type II methyltransferase M.BseCI from Geobacillus stearothermophilus (Bacillus stearothermophilus).